Here is a 312-residue protein sequence, read N- to C-terminus: DDRGK domain-containing protein 1 (312 aa).

Residues Met1–Glu2 are Lumenal-facing. The helical transmembrane segment at Leu3–Leu23 threads the bilayer. Residues Gln24–Ser312 lie on the Cytoplasmic side of the membrane. The segment at Pro30–Val163 is disordered. Positions Arg52–Ala85 are enriched in low complexity. Positions Asp90 to Ala99 are enriched in acidic residues. Over residues Leu110 to Val163 the composition is skewed to basic and acidic residues.

Belongs to the DDRGK1 family. Interacts with Atg9; the interaction is transient.

It is found in the endoplasmic reticulum membrane. Substrate adapter for ufmylation, the covalent attachment of the ubiquitin-like modifier UFM1 to substrate proteins. Required for ufmylation of Atg9; protects the nervous system during aging, possibly by stabilizing Atg9 and supporting its function. The sequence is that of DDRGK domain-containing protein 1 from Drosophila erecta (Fruit fly).